We begin with the raw amino-acid sequence, 239 residues long: Large ribosomal subunit protein uL3 (239 aa).

Disordered regions lie at residues 140 to 166 and 211 to 239; these read SHRS…PGHM and PLPK…QEGA. The residue at position 151 (Gln151) is an N5-methylglutamine.

It belongs to the universal ribosomal protein uL3 family. In terms of assembly, part of the 50S ribosomal subunit. Forms a cluster with proteins L14 and L19. Methylated by PrmB.

Functionally, one of the primary rRNA binding proteins, it binds directly near the 3'-end of the 23S rRNA, where it nucleates assembly of the 50S subunit. The polypeptide is Large ribosomal subunit protein uL3 (Bradyrhizobium sp. (strain BTAi1 / ATCC BAA-1182)).